Reading from the N-terminus, the 116-residue chain is U16-barytoxin-Tl1f (116 aa).

The first 20 residues, 1-20 (MKTIIVFLSLLVLATKFGDA), serve as a signal peptide directing secretion. Residues 21 to 74 (NEGVNQEQMKEVIQNEFREDFLNEMAAMSLLQQLEAIESTLLEKEADRNSRQKR) constitute a propeptide that is removed on maturation. 3 disulfides stabilise this stretch: C75-C90, C82-C95, and C89-C110. An N-linked (GlcNAc...) asparagine glycan is attached at N85.

It belongs to the neurotoxin 14 (magi-1) family. 06 (ICK-Trit) subfamily. As to expression, expressed by the venom gland.

It localises to the secreted. In terms of biological role, ion channel inhibitor. In Trittame loki (Brush-footed trapdoor spider), this protein is U16-barytoxin-Tl1f.